The sequence spans 170 residues: Cyclic pyranopterin monophosphate synthase (170 aa).

Substrate contacts are provided by residues 89–91 and 125–126; these read LCH and ME. Asp140 is an active-site residue.

The protein belongs to the MoaC family. As to quaternary structure, homohexamer; trimer of dimers.

The catalysed reaction is (8S)-3',8-cyclo-7,8-dihydroguanosine 5'-triphosphate = cyclic pyranopterin phosphate + diphosphate. Its pathway is cofactor biosynthesis; molybdopterin biosynthesis. Its function is as follows. Catalyzes the conversion of (8S)-3',8-cyclo-7,8-dihydroguanosine 5'-triphosphate to cyclic pyranopterin monophosphate (cPMP). In Streptomyces avermitilis (strain ATCC 31267 / DSM 46492 / JCM 5070 / NBRC 14893 / NCIMB 12804 / NRRL 8165 / MA-4680), this protein is Cyclic pyranopterin monophosphate synthase.